Consider the following 160-residue polypeptide: Nucleotide-binding protein Ping_2261 (160 aa).

Belongs to the YajQ family.

Its function is as follows. Nucleotide-binding protein. The sequence is that of Nucleotide-binding protein Ping_2261 from Psychromonas ingrahamii (strain DSM 17664 / CCUG 51855 / 37).